An 830-amino-acid polypeptide reads, in one-letter code: Ribosome biogenesis protein ERB1 (830 aa).

A disordered region spans residues 1-141 (MAPQPLKVGT…ENKDLPVDEK (141 aa)). 2 stretches are compositionally biased toward acidic residues: residues 35–44 (VSEESDEEFG) and 52–109 (MSDD…DSDS). A compositionally biased stretch (basic and acidic residues) spans 131-141 (EENKDLPVDEK). WD repeat units follow at residues 481–520 (PGDT…EVWR), 523–563 (LHAG…APHI), 660–698 (KTPG…LIRT), 701–740 (SGVK…KPYK), 744–783 (YHNR…DLMQ), and 799–830 (IDGI…LWCS).

The protein belongs to the WD repeat BOP1/ERB1 family. In terms of assembly, component of the NOP7 complex, composed of ERB1, NOP7 and YTM1. The complex is held together by ERB1, which interacts with NOP7 via its N-terminal domain and with YTM1 via a high-affinity interaction between the seven-bladed beta-propeller domains of the 2 proteins. The NOP7 complex associates with the 66S pre-ribosome.

It is found in the nucleus. It localises to the nucleolus. The protein resides in the nucleoplasm. Its function is as follows. Component of the NOP7 complex, which is required for maturation of the 25S and 5.8S ribosomal RNAs and formation of the 60S ribosome. The chain is Ribosome biogenesis protein ERB1 from Cryptococcus neoformans var. neoformans serotype D (strain B-3501A) (Filobasidiella neoformans).